Here is a 1061-residue protein sequence, read N- to C-terminus: RecBCD enzyme subunit RecC (1061 aa).

The protein belongs to the RecC family. As to quaternary structure, heterotrimer of RecB, RecC and RecD. All subunits contribute to DNA-binding.

A helicase/nuclease that prepares dsDNA breaks (DSB) for recombinational DNA repair. Binds to DSBs and unwinds DNA via a highly rapid and processive ATP-dependent bidirectional helicase activity. Unwinds dsDNA until it encounters a Chi (crossover hotspot instigator) sequence from the 3' direction. Cuts ssDNA a few nucleotides 3' to the Chi site. The properties and activities of the enzyme are changed at Chi. The Chi-altered holoenzyme produces a long 3'-ssDNA overhang and facilitates RecA-binding to the ssDNA for homologous DNA recombination and repair. Holoenzyme degrades any linearized DNA that is unable to undergo homologous recombination. In the holoenzyme this subunit recognizes the wild-type Chi sequence, and when added to isolated RecB increases its ATP-dependent helicase processivity. The sequence is that of RecBCD enzyme subunit RecC from Buchnera aphidicola subsp. Schizaphis graminum (strain Sg).